The following is a 221-amino-acid chain: ATP phosphoribosyltransferase (221 aa).

This sequence belongs to the ATP phosphoribosyltransferase family. Short subfamily. In terms of assembly, heteromultimer composed of HisG and HisZ subunits.

It localises to the cytoplasm. The catalysed reaction is 1-(5-phospho-beta-D-ribosyl)-ATP + diphosphate = 5-phospho-alpha-D-ribose 1-diphosphate + ATP. It participates in amino-acid biosynthesis; L-histidine biosynthesis; L-histidine from 5-phospho-alpha-D-ribose 1-diphosphate: step 1/9. Functionally, catalyzes the condensation of ATP and 5-phosphoribose 1-diphosphate to form N'-(5'-phosphoribosyl)-ATP (PR-ATP). Has a crucial role in the pathway because the rate of histidine biosynthesis seems to be controlled primarily by regulation of HisG enzymatic activity. The protein is ATP phosphoribosyltransferase of Carboxydothermus hydrogenoformans (strain ATCC BAA-161 / DSM 6008 / Z-2901).